The sequence spans 3456 residues: Genome polyprotein (3456 aa).

One can recognise a Peptidase S30 domain in the interval 600–743 (NVANIPLDDF…ATRLKQIQFY (144 aa)). Catalysis depends on for P1 proteinase activity residues His-640, Asp-652, and Ser-689. Residues 1075–1196 (VWEFNEGYCY…EGEMLTYKVG (122 aa)) form the Peptidase C6 domain. Cys-1083 (for helper component proteinase activity) is an active-site residue. An HAT 1 repeat occupies 1094–1126 (FINEDEMEFYKNQMNQIVLNLGAWPTFEQYLVE). The active-site For helper component proteinase activity is His-1155. In terms of domain architecture, Helicase ATP-binding spans 1617 to 1768 (NIRTSGETDV…TRHKIKVETL (152 aa)). An ATP-binding site is contributed by 1630–1637 (SGVGGGKS). The region spanning 1787–1947 (DATSVGDVIL…GIKPVCDRVD (161 aa)) is the Helicase C-terminal domain. Tyr-2304 bears the O-(5'-phospho-RNA)-tyrosine mark. The 225-residue stretch at 2412-2636 (AVDSHVGTPT…VEWSRLLPTT (225 aa)) folds into the Peptidase C4 domain. Catalysis depends on for nuclear inclusion protein A activity residues His-2457, Asp-2494, and Cys-2566. One copy of the HAT 2 repeat lies at 2597–2629 (HIFEPVNETFIEMLAKMEYAKGFWKFNPELVEW). The region spanning 2891-3011 (WVFIDCDGSR…NCPRSTANAI (121 aa)) is the RdRp catalytic domain. The stretch at 3082 to 3115 (LNAAYIESFGYEDLMTEIEKFAHFWAKKHGLNDV) is one HAT 3 repeat.

In terms of processing, VPg is uridylylated by the polymerase and is covalently attached to the 5'-end of the genomic RNA. This uridylylated form acts as a nucleotide-peptide primer for the polymerase. Genome polyprotein of potyviruses undergoes post-translational proteolytic processing by the main proteinase NIa-pro resulting in the production of at least ten individual proteins. The P1 proteinase and the HC-pro cleave only their respective C-termini autocatalytically. 6K1 is essential for proper proteolytic separation of P3 from CI.

Its subcellular location is the host cytoplasmic vesicle. It is found in the virion. The catalysed reaction is RNA(n) + a ribonucleoside 5'-triphosphate = RNA(n+1) + diphosphate. It catalyses the reaction Hydrolyzes glutaminyl bonds, and activity is further restricted by preferences for the amino acids in P6 - P1' that vary with the species of potyvirus, e.g. Glu-Xaa-Xaa-Tyr-Xaa-Gln-|-(Ser or Gly) for the enzyme from tobacco etch virus. The natural substrate is the viral polyprotein, but other proteins and oligopeptides containing the appropriate consensus sequence are also cleaved.. It carries out the reaction Hydrolyzes a Gly-|-Gly bond at its own C-terminus, commonly in the sequence -Tyr-Xaa-Val-Gly-|-Gly, in the processing of the potyviral polyprotein.. In terms of biological role, required for aphid transmission and also has proteolytic activity. Only cleaves a Gly-Gly dipeptide at its own C-terminus. Interacts with virions and aphid stylets. Acts as a suppressor of RNA-mediated gene silencing, also known as post-transcriptional gene silencing (PTGS), a mechanism of plant viral defense that limits the accumulation of viral RNAs. May have RNA-binding activity. Functionally, has helicase activity. It may be involved in replication. Its function is as follows. Indispensable for virus replication. Mediates the cap-independent, EIF4E-dependent translation of viral genomic RNAs. Binds to the cap-binding site of host EIF4E and thus interferes with the host EIF4E-dependent mRNA export and translation. VPg-RNA directly binds EIF4E and is a template for transcription. Also forms trimeric complexes with EIF4E-EIF4G, which are templates for translation. In terms of biological role, has RNA-binding and proteolytic activities. Functionally, an RNA-dependent RNA polymerase that plays an essential role in the virus replication. Its function is as follows. Involved in aphid transmission, cell-to-cell and systemis movement, encapsidation of the viral RNA and in the regulation of viral RNA amplification. The chain is Genome polyprotein from Sweet potato mild mottle virus (isolate Salazar) (SPMMV).